A 407-amino-acid chain; its full sequence is Arylacetamide deacetylase-like 4 (407 aa).

Residues 1-4 lie on the Cytoplasmic side of the membrane; it reads MAVP. A helical; Signal-anchor for type II membrane protein membrane pass occupies residues 5–25; that stretch reads WLVLLLALPIFFLGVFVWAVF. At 26-407 the chain is on the lumenal side; it reads EHFLTTDIPA…NAVVSYIKGI (382 aa). Residues 119 to 121 carry the Involved in the stabilization of the negatively charged intermediate by the formation of the oxyanion hole motif; it reads HGG. Asn-168 carries N-linked (GlcNAc...) asparagine glycosylation. The active site involves Ser-193. The N-linked (GlcNAc...) asparagine glycan is linked to Asn-269. Residues Asp-347 and His-377 contribute to the active site.

The protein belongs to the 'GDXG' lipolytic enzyme family.

Its subcellular location is the membrane. In Homo sapiens (Human), this protein is Arylacetamide deacetylase-like 4 (AADACL4).